Here is a 407-residue protein sequence, read N- to C-terminus: Lysine racemase (407 aa).

A signal peptide spans 1–18 (MSLGIRYLALLPLFVITA). Cys19 is lipidated: N-palmitoyl cysteine. Residue Cys19 is the site of S-diacylglycerol cysteine attachment. Cys70 and Cys96 are joined by a disulfide. Lys74 (proton acceptor) is an active-site residue. Lys74 is modified (N6-(pyridoxal phosphate)lysine). Residue Arg173 participates in substrate binding. Tyr299 acts as the Proton acceptor in catalysis. Met347 is a binding site for substrate.

Belongs to the alanine racemase family. Bsr subfamily. In terms of assembly, forms a head-to-tail homodimer in the structure. It depends on pyridoxal 5'-phosphate as a cofactor.

Its subcellular location is the cell membrane. It localises to the periplasm. The enzyme catalyses L-lysine = D-lysine. It carries out the reaction L-arginine = D-arginine. Its activity is regulated as follows. The racemization activity of Lyr is completely inhibited by hydroxylamine. In terms of biological role, amino-acid racemase that catalyzes the interconversion of L-lysine and D-lysine. To a lesser extent, is also able to interconvert arginine enantiomers. Cannot use methionine, asparagine, alanine, leucine, glutamine, phenylalanine and histidine as substrates. This Proteus mirabilis protein is Lysine racemase.